The primary structure comprises 146 residues: UPF0735 ACT domain-containing protein CHY_1913 (146 aa).

In terms of domain architecture, ACT spans 70–145 (TLALNLEHRA…GVSKVELVGQ (76 aa)).

The protein belongs to the UPF0735 family.

This chain is UPF0735 ACT domain-containing protein CHY_1913, found in Carboxydothermus hydrogenoformans (strain ATCC BAA-161 / DSM 6008 / Z-2901).